The chain runs to 321 residues: Phospho-N-acetylmuramoyl-pentapeptide-transferase (321 aa).

The next 10 membrane-spanning stretches (helical) occupy residues 4–24 (MVWA…WLIP), 51–71 (TMGG…TVGF), 75–95 (SGVL…DDYI), 109–129 (QKFT…VYGI), 139–159 (GFEV…LLIV), 173–193 (GLAA…ASAG), 195–215 (SDVT…FLFF), 222–242 (MFMG…LALL), 247–267 (LILP…ILQV), and 297–317 (VVYT…LLAM).

Belongs to the glycosyltransferase 4 family. MraY subfamily. Mg(2+) serves as cofactor.

The protein localises to the cell membrane. The enzyme catalyses UDP-N-acetyl-alpha-D-muramoyl-L-alanyl-gamma-D-glutamyl-meso-2,6-diaminopimeloyl-D-alanyl-D-alanine + di-trans,octa-cis-undecaprenyl phosphate = di-trans,octa-cis-undecaprenyl diphospho-N-acetyl-alpha-D-muramoyl-L-alanyl-D-glutamyl-meso-2,6-diaminopimeloyl-D-alanyl-D-alanine + UMP. It functions in the pathway cell wall biogenesis; peptidoglycan biosynthesis. Functionally, catalyzes the initial step of the lipid cycle reactions in the biosynthesis of the cell wall peptidoglycan: transfers peptidoglycan precursor phospho-MurNAc-pentapeptide from UDP-MurNAc-pentapeptide onto the lipid carrier undecaprenyl phosphate, yielding undecaprenyl-pyrophosphoryl-MurNAc-pentapeptide, known as lipid I. This is Phospho-N-acetylmuramoyl-pentapeptide-transferase from Heliobacterium modesticaldum (strain ATCC 51547 / Ice1).